We begin with the raw amino-acid sequence, 105 residues long: Ig lambda chain C region (105 aa).

In terms of domain architecture, Ig-like spans 2 to 100 (PKAAPTVNLF…EGTIVEKTVT (99 aa)). The cysteines at positions 27 and 86 are disulfide-linked.

In Sus scrofa (Pig), this protein is Ig lambda chain C region.